The primary structure comprises 445 residues: MMWYNLTIKQLKNVRNFMIQKPKGTSDFFLEKADLFQYILDTFRKEAELFNYSYIQTPILEFYDLFYRSVGETTDVVSKEMFIFNDRSERKMALRPEKTAGVIRSLVENKLIFNAENKFYYYGSMFRYERPQKGRYREFTQIGCEWIEDNSDFSDFEILLFASKFLGNFNFNKVILKINNLGNKVERENYLIELKKYFYKFKDKFDEISLKRLEKNPLRILDDKEINHQDFIKNAPKLFDFLNSETVQKFNNLQNYLRKSNISFEIDYSLVRGFDYYNNLVFEFVYYDEESRSELTILGGGRYSNLIEELGGPKKDAIGFAAGVERLMILLKEKEWEKPIKTSIFVFNKDHEDLYKNFDFVYKLRKRDLVVKQNVSNFKLQKIYSKIVNEGIKFLIFFDEKLNQIIIKNLINKNFLDLTNKSQEEKINLVKKFIESENKNENNSK.

It belongs to the class-II aminoacyl-tRNA synthetase family. As to quaternary structure, homodimer.

Its subcellular location is the cytoplasm. It carries out the reaction tRNA(His) + L-histidine + ATP = L-histidyl-tRNA(His) + AMP + diphosphate + H(+). This Mycoplasma mobile (strain ATCC 43663 / 163K / NCTC 11711) (Mesomycoplasma mobile) protein is Histidine--tRNA ligase.